We begin with the raw amino-acid sequence, 173 residues long: Photosystem I assembly protein Ycf3 (173 aa).

TPR repeat units follow at residues 35-68 (AFVY…EEDP), 72-105 (SYIL…NPRM), and 120-153 (GEKA…APNN).

It belongs to the Ycf3 family.

It localises to the cellular thylakoid membrane. In terms of biological role, essential for the assembly of the photosystem I (PSI) complex. May act as a chaperone-like factor to guide the assembly of the PSI subunits. This chain is Photosystem I assembly protein Ycf3, found in Microcystis aeruginosa (strain NIES-843 / IAM M-2473).